The sequence spans 329 residues: DNA-directed RNA polymerase subunit alpha (329 aa).

Residues 1–235 (MQGSVTEFLK…EQLEAFVDLR (235 aa)) form an alpha N-terminal domain (alpha-NTD) region. Residues 249-329 (FDPILLRPVD…NWPPASIADE (81 aa)) are alpha C-terminal domain (alpha-CTD).

This sequence belongs to the RNA polymerase alpha chain family. Homodimer. The RNAP catalytic core consists of 2 alpha, 1 beta, 1 beta' and 1 omega subunit. When a sigma factor is associated with the core the holoenzyme is formed, which can initiate transcription.

The catalysed reaction is RNA(n) + a ribonucleoside 5'-triphosphate = RNA(n+1) + diphosphate. Its function is as follows. DNA-dependent RNA polymerase catalyzes the transcription of DNA into RNA using the four ribonucleoside triphosphates as substrates. This is DNA-directed RNA polymerase subunit alpha from Sodalis glossinidius (strain morsitans).